The chain runs to 348 residues: MNITVAIDCMGGDHGPHITVPSAVEYMHHDCETNIILVGKPEVISRELDALKVSPGSRLRLHPANEVVGMDEHPAVALRNKKDSSMRVALNLIKSGEAQACISAGNTGALLATSRFVLKTIPGIDRPALAVILPTISGHTYVLDLGANVNCTAEHLLQFGIMGATLVSSVENKPNPSIGLLNVGEEDIKGNDVVKRAAELFRSSGLNFYGNIEGDDIYRGTTNVVVCDGFVGNVALKTSEGLAQMLASYLREEFRRSLFSRLAGLVALPVINAFRRRVDHRQYNGASLLGLRGVVIKSHGSADSYAFRCAIRRAVEEVRGGTLRNIVEHIETLRNNIEQNIAQPVSIE.

Belongs to the PlsX family. Homodimer. Probably interacts with PlsY.

The protein resides in the cytoplasm. The enzyme catalyses a fatty acyl-[ACP] + phosphate = an acyl phosphate + holo-[ACP]. Its pathway is lipid metabolism; phospholipid metabolism. Catalyzes the reversible formation of acyl-phosphate (acyl-PO(4)) from acyl-[acyl-carrier-protein] (acyl-ACP). This enzyme utilizes acyl-ACP as fatty acyl donor, but not acyl-CoA. This is Phosphate acyltransferase from Nitrosomonas europaea (strain ATCC 19718 / CIP 103999 / KCTC 2705 / NBRC 14298).